A 937-amino-acid chain; its full sequence is Inactive tyrosine-protein kinase transmembrane receptor ROR1 (937 aa).

The N-terminal stretch at 1–29 (MHRPRRRGTRPPLLALLAALLLAARGAAA) is a signal peptide. Over 30–406 (QETELSVSAE…KEKNKMEILY (377 aa)) the chain is Extracellular. Residues 42 to 147 (PTSSWNISSE…EVVSSTGVLF (106 aa)) form the Ig-like C2-type domain. N-linked (GlcNAc...) asparagine glycans are attached at residues asparagine 47 and asparagine 66. 9 disulfides stabilise this stretch: cysteine 79–cysteine 131, cysteine 170–cysteine 235, cysteine 178–cysteine 228, cysteine 219–cysteine 260, cysteine 248–cysteine 296, cysteine 252–cysteine 282, cysteine 313–cysteine 391, cysteine 334–cysteine 374, and cysteine 362–cysteine 386. The region spanning 165-299 (EEDGFCQPYR…SPEAANCIRI (135 aa)) is the FZ domain. Residue asparagine 184 is glycosylated (N-linked (GlcNAc...) asparagine). The Kringle domain maps to 312–391 (KCYNSTGVDY…KSDLCDIPAC (80 aa)). The N-linked (GlcNAc...) asparagine glycan is linked to asparagine 315. A helical transmembrane segment spans residues 407–427 (ILVPSVAIPLAIALLFFFICV). Residues 428–937 (CRNNQKSSSA…HTESMISAEL (510 aa)) are Cytoplasmic-facing. The 274-residue stretch at 473–746 (VRFMEELGEC…PRFKDIHVRL (274 aa)) folds into the Protein kinase domain. ATP contacts are provided by residues 479-487 (LGECAFGKI) and lysine 506. The residue at position 645 (tyrosine 645) is a Phosphotyrosine; by autocatalysis. The span at 753-762 (SSHTSSTTPS) shows a compositional bias: low complexity. Disordered stretches follow at residues 753 to 779 (SSHTSSTTPSGGNATTQTTSLSASPVS) and 833 to 890 (AAHY…HMSI). Residues 763-779 (GGNATTQTTSLSASPVS) are compositionally biased toward polar residues. The segment covering 854 to 864 (RSPSSASGSTS) has biased composition (low complexity). Positions 865–880 (TGHVTSLPSSGSNQEA) are enriched in polar residues.

Belongs to the protein kinase superfamily. Tyr protein kinase family. ROR subfamily. Interacts with ERBB2 and IGFBP5. As to expression, expressed strongly in human heart, lung and kidney, but weakly in the CNS. Isoform Short is strongly expressed in fetal and adult CNS and in a variety of human cancers, including those originating from CNS or PNS neuroectoderm.

It localises to the membrane. The protein localises to the cell projection. It is found in the axon. Its function is as follows. Has very low kinase activity in vitro and is unlikely to function as a tyrosine kinase in vivo. Receptor for ligand WNT5A which activate downstream NFkB signaling pathway and may result in the inhibition of WNT3A-mediated signaling. In inner ear, crucial for spiral ganglion neurons to innervate auditory hair cells. Via IGFBP5 ligand, forms a complex with ERBB2 to enhance CREB oncogenic signaling. This Homo sapiens (Human) protein is Inactive tyrosine-protein kinase transmembrane receptor ROR1 (ROR1).